An 87-amino-acid polypeptide reads, in one-letter code: HssA/B-like protein 7 (87 aa).

Residues 1-22 are compositionally biased toward polar residues; it reads MSILSALTSISNPMKSTKSSVA. Positions 1 to 23 are disordered; the sequence is MSILSALTSISNPMKSTKSSVAN.

The protein belongs to the hssA/B family.

The chain is HssA/B-like protein 7 (hssl7) from Dictyostelium discoideum (Social amoeba).